Here is a 341-residue protein sequence, read N- to C-terminus: Hyaluronan and proteoglycan link protein 2 (341 aa).

A signal peptide spans M1–G27. In terms of domain architecture, Ig-like V-type spans P35–T143. 5 cysteine pairs are disulfide-bonded: C58–C129, C171–C241, C195–C216, C266–C337, and C291–C312. 2 consecutive Link domains span residues V149 to T243 and L246 to A339.

It belongs to the HAPLN family. As to expression, brain.

It is found in the secreted. The protein localises to the extracellular space. It localises to the extracellular matrix. Its function is as follows. Mediates a firm binding of versican V2 to hyaluronic acid. May play a pivotal role in the formation of the hyaluronan-associated matrix in the central nervous system (CNS) which facilitates neuronal conduction and general structural stabilization. Binds to hyaluronic acid. The sequence is that of Hyaluronan and proteoglycan link protein 2 (Hapln2) from Rattus norvegicus (Rat).